The chain runs to 135 residues: Ribonuclease P protein component 2 (135 aa).

Belongs to the eukaryotic/archaeal RNase P protein component 2 family. Consists of a catalytic RNA component and at least 4-5 protein subunits.

The protein resides in the cytoplasm. It catalyses the reaction Endonucleolytic cleavage of RNA, removing 5'-extranucleotides from tRNA precursor.. In terms of biological role, part of ribonuclease P, a protein complex that generates mature tRNA molecules by cleaving their 5'-ends. The polypeptide is Ribonuclease P protein component 2 (Methanosarcina barkeri (strain Fusaro / DSM 804)).